A 342-amino-acid chain; its full sequence is Ketol-acid reductoisomerase (NADP(+)) (342 aa).

The KARI N-terminal Rossmann domain maps to Val2–Thr181. NADP(+) is bound by residues Tyr25–Gln28, Arg48, Ser52, and Asp82–Gln85. Residue His107 is part of the active site. Residue Gly133 participates in NADP(+) binding. The KARI C-terminal knotted domain occupies Thr182–Val327. Positions 190, 194, 226, and 230 each coordinate Mg(2+). Position 251 (Ser251) interacts with substrate.

Belongs to the ketol-acid reductoisomerase family. Mg(2+) serves as cofactor.

It carries out the reaction (2R)-2,3-dihydroxy-3-methylbutanoate + NADP(+) = (2S)-2-acetolactate + NADPH + H(+). The catalysed reaction is (2R,3R)-2,3-dihydroxy-3-methylpentanoate + NADP(+) = (S)-2-ethyl-2-hydroxy-3-oxobutanoate + NADPH + H(+). It functions in the pathway amino-acid biosynthesis; L-isoleucine biosynthesis; L-isoleucine from 2-oxobutanoate: step 2/4. Its pathway is amino-acid biosynthesis; L-valine biosynthesis; L-valine from pyruvate: step 2/4. Its function is as follows. Involved in the biosynthesis of branched-chain amino acids (BCAA). Catalyzes an alkyl-migration followed by a ketol-acid reduction of (S)-2-acetolactate (S2AL) to yield (R)-2,3-dihydroxy-isovalerate. In the isomerase reaction, S2AL is rearranged via a Mg-dependent methyl migration to produce 3-hydroxy-3-methyl-2-ketobutyrate (HMKB). In the reductase reaction, this 2-ketoacid undergoes a metal-dependent reduction by NADPH to yield (R)-2,3-dihydroxy-isovalerate. This Bacillus velezensis (strain DSM 23117 / BGSC 10A6 / LMG 26770 / FZB42) (Bacillus amyloliquefaciens subsp. plantarum) protein is Ketol-acid reductoisomerase (NADP(+)).